The sequence spans 352 residues: C-X-C chemokine receptor type 4 (352 aa).

Positions 1–21 (MEGISIYTSDNYTEEMGSGDY) are important for chemokine binding and signaling. The Extracellular segment spans residues 1–38 (MEGISIYTSDNYTEEMGSGDYDSIKEPCFREENAHFNR). The residue at position 7 (Tyr-7) is a Sulfotyrosine. N-linked (GlcNAc...) asparagine glycosylation occurs at Asn-11. Sulfotyrosine is present on Tyr-12. An O-linked (Xyl...) (chondroitin sulfate) serine glycan is attached at Ser-18. Tyr-21 is modified (sulfotyrosine). Disulfide bonds link Cys-28–Cys-274 and Cys-109–Cys-186. Residues 39–63 (IFLPTIYSIIFLTGIVGNGLVILVM) traverse the membrane as a helical segment. Residues 64 to 77 (GYQKKLRSMTDKYR) are Cytoplasmic-facing. A helical membrane pass occupies residues 78–99 (LHLSVADLLFVITLPFWAVDAV). The segment at 94 to 97 (WAVD) is chemokine binding. Over 100–110 (ANWYFGNFLCK) the chain is Extracellular. The chain crosses the membrane as a helical span at residues 111-130 (AVHVIYTVNLYSSVLILAFI). The interval 113 to 117 (HVIYT) is chemokine binding. At 131–154 (SLDRYLAIVHATNSQKPRKLLAEK) the chain is on the cytoplasmic side. Positions 133 to 135 (DRY) match the Important for signaling motif. The segment at 135–147 (YLAIVHATNSQKP) is involved in dimerization; when bound to chemokine. The chain crosses the membrane as a helical span at residues 155–174 (VVYVGVWIPALLLTIPDFIF). Residues 175 to 195 (ASVSEADDRYICDRFYPNDLW) are Extracellular-facing. The interval 186 to 190 (CDRFY) is chemokine binding, important for signaling. The segment at 191–210 (PNDLWVVVFQFQHIMVGLIL) is involved in dimerization. Residues 196 to 216 (VVVFQFQHIMVGLILPGIVIL) form a helical membrane-spanning segment. Residues 217–241 (SCYCIIISKLSHSKGHQKGKALKTT) are Cytoplasmic-facing. Residues 242–261 (VILILAFFACWLPYYIGISI) traverse the membrane as a helical segment. The Extracellular segment spans residues 262 to 282 (DSFILLEIIKQGCEFENTVHK). Residues 266–268 (LLE) are involved in dimerization. The helical transmembrane segment at 283–302 (WISITEALAFFHCCLNPILY) threads the bilayer. Residues 303 to 352 (AFLGAKFKTSAQHALTSVSRGSSLKILSKGKRGGHSSVSTESESSSFHSS) lie on the Cytoplasmic side of the membrane. Phosphoserine occurs at positions 319 and 321. Residues Ser-324 and Ser-325 each carry the phosphoserine; by PKC and GRK6 modification. The segment at 329–352 (LSKGKRGGHSSVSTESESSSFHSS) is disordered. A Phosphoserine; by GRK6 modification is found at Ser-330. Lys-331 is covalently cross-linked (Glycyl lysine isopeptide (Lys-Gly) (interchain with G-Cter in ubiquitin)). The span at 337 to 352 (HSSVSTESESSSFHSS) shows a compositional bias: low complexity. A Phosphoserine; by GRK6 modification is found at Ser-339. A phosphoserine mark is found at Ser-348 and Ser-351.

The protein belongs to the G-protein coupled receptor 1 family. As to quaternary structure, monomer. Can form homodimers. Interacts with CD164. Interacts with ARRB2; the interaction is dependent on the C-terminal phosphorylation of CXCR4 and allows activation of MAPK1 and MAPK3. Interacts with ARR3; the interaction is dependent on the C-terminal phosphorylation of CXCR4 and modulates calcium mobilization. Interacts with RNF113A; the interaction, enhanced by CXCL12, promotes CXCR4 ubiquitination and subsequent degradation. Interacts (via the cytoplasmic C-terminal) with ITCH (via the WW domains I and II); the interaction, enhanced by CXCL12, promotes CXCR4 ubiquitination and leads to its degradation. Interacts with extracellular ubiquitin. Interacts with DBN1; this interaction is enhanced by antigenic stimulation. Following LPS binding, may form a complex with GDF5, HSP90AA1 and HSPA8. Phosphorylated on agonist stimulation. Rapidly phosphorylated on serine and threonine residues in the C-terminal. Phosphorylation at Ser-324 and Ser-325 leads to recruitment of ITCH, ubiquitination and protein degradation. In terms of processing, ubiquitinated after ligand binding, leading to its degradation. Ubiquitinated by ITCH at the cell membrane on agonist stimulation. The ubiquitin-dependent mechanism, endosomal sorting complex required for transport (ESCRT), then targets CXCR4 for lysosomal degradation. This process is dependent also on prior Ser-/Thr-phosphorylation in the C-terminal of CXCR4. Also binding of ARRB1 to STAM negatively regulates CXCR4 sorting to lysosomes though modulating ubiquitination of SFR5S. Post-translationally, sulfation is required for efficient binding of CXCL12/SDF-1alpha and promotes its dimerization. O- and N-glycosylated. N-glycosylation can mask coreceptor function. The O-glycosylation chondroitin sulfate attachment does not affect interaction with CXCL12/SDF-1alpha nor its coreceptor activity.

Its subcellular location is the cell membrane. It is found in the cell junction. It localises to the early endosome. The protein resides in the late endosome. The protein localises to the lysosome. Functionally, receptor for the C-X-C chemokine CXCL12/SDF-1 that transduces a signal by increasing intracellular calcium ion levels and enhancing MAPK1/MAPK3 activation. Involved in the AKT signaling cascade. Plays a role in regulation of cell migration, e.g. during wound healing. Acts as a receptor for extracellular ubiquitin; leading to enhanced intracellular calcium ions and reduced cellular cAMP levels. Binds bacterial lipopolysaccharide (LPS) et mediates LPS-induced inflammatory response, including TNF secretion by monocytes. Involved in hematopoiesis and in cardiac ventricular septum formation. Also plays an essential role in vascularization of the gastrointestinal tract, probably by regulating vascular branching and/or remodeling processes in endothelial cells. Involved in cerebellar development. In the CNS, could mediate hippocampal-neuron survival. This is C-X-C chemokine receptor type 4 (CXCR4) from Chlorocebus aethiops (Green monkey).